A 359-amino-acid polypeptide reads, in one-letter code: AA9 family lytic polysaccharide monooxygenase C (359 aa).

A signal peptide spans 1–16; sequence MKTGSILAALVASASA. His17 and His99 together coordinate Cu(2+). 2 cysteine pairs are disulfide-bonded: Cys55–Cys185 and Cys155–Cys243. O2 contacts are provided by His171 and Gln180. Tyr182 is a Cu(2+) binding site. 2 N-linked (GlcNAc...) asparagine glycosylation sites follow: Asn189 and Asn284. Residues 244 to 320 are disordered; it reads PAGGSGGSSP…NPQPTNGGNS (77 aa). Residues 251–296 show a composition bias toward low complexity; that stretch reads SSPAPATTASTPKPTSASAPKPVSTTASTPKPTNGSGSGTGAAHST. The span at 307-319 shows a compositional bias: polar residues; the sequence is TKASNPQPTNGGN. In terms of domain architecture, CBM1 spans 323–358; it reads RAAALYGQCGGKGWTGPTSCASGTCKFSNDWYSQCL.

The protein belongs to the polysaccharide monooxygenase AA9 family. Cu(2+) is required as a cofactor.

It localises to the secreted. It carries out the reaction [(1-&gt;4)-beta-D-glucosyl]n+m + reduced acceptor + O2 = 4-dehydro-beta-D-glucosyl-[(1-&gt;4)-beta-D-glucosyl]n-1 + [(1-&gt;4)-beta-D-glucosyl]m + acceptor + H2O.. Its activity is regulated as follows. Activity in inhibited by excessive amounts of H(2)O(2). In terms of biological role, lytic polysaccharide monooxygenase (LPMO) that depolymerizes crystalline and amorphous polysaccharides via the oxidation of scissile alpha- or beta-(1-4)-glycosidic bonds, yielding C4 oxidation products. Catalysis by LPMOs requires the reduction of the active-site copper from Cu(II) to Cu(I) by a reducing agent and H(2)O(2) or O(2) as a cosubstrate. Degrades various hemicelluloses, in particular xyloglucan. Active on tamarind xyloglucan and konjac glucomannan. Acts on the glucose backbone of xyloglucan, accepting various substitutions (xylose, galactose) in almost allpositions. In contrast to all previously characterized LPMOs, which are active only on polysaccharides, is able to cleave soluble cello-oligosaccharides as short as a tetramer. The cello-oligosaccharide products released by this enzyme contain a C4 gemdiol/keto group at the non-reducing end. Binds to the inner wood cell wall layer and consumes enzymatically generated H(2)O(2). The sequence is that of AA9 family lytic polysaccharide monooxygenase C (gh61-3) from Neurospora crassa (strain ATCC 24698 / 74-OR23-1A / CBS 708.71 / DSM 1257 / FGSC 987).